The following is a 362-amino-acid chain: D-alanine--D-alanine ligase (362 aa).

Residues 134–345 enclose the ATP-grasp domain; that stretch reads KILAQRAGVP…YPDLITRLIR (212 aa). 170–225 serves as a coordination point for ATP; sequence GQLGTSNLFVKPSNQGSSVGITHVTDDSNYAEALAEAFKYDDKVLVEEGIVGTEVE. The Mg(2+) site is built by D298, E312, and N314.

It belongs to the D-alanine--D-alanine ligase family. Requires Mg(2+) as cofactor. The cofactor is Mn(2+).

Its subcellular location is the cytoplasm. It catalyses the reaction 2 D-alanine + ATP = D-alanyl-D-alanine + ADP + phosphate + H(+). It participates in cell wall biogenesis; peptidoglycan biosynthesis. Its function is as follows. Cell wall formation. This is D-alanine--D-alanine ligase from Lactobacillus delbrueckii subsp. bulgaricus (strain ATCC 11842 / DSM 20081 / BCRC 10696 / JCM 1002 / NBRC 13953 / NCIMB 11778 / NCTC 12712 / WDCM 00102 / Lb 14).